A 256-amino-acid polypeptide reads, in one-letter code: Mannose-specific lectin 1 (256 aa).

The signal sequence occupies residues 1 to 23 (MAKLLLFLLPAILGLLVPRSAVA). 2 consecutive Bulb-type lectin domains span residues 26–131 (TNYL…PWVR) and 145–252 (NNLL…SKRS). Beta-D-mannose-binding positions include 51–55 (QDDCN), Tyr59, Trp63, Gln64, 170–174 (QGDCN), Tyr178, and 182–185 (YGWQ). Positions 51–59 (QDDCNLVLY) match the Carbohydrate-binding motif 1 motif. Intrachain disulfides connect Cys54–Cys74 and Cys173–Cys195. Positions 170–178 (QGDCNLVLY) match the Carbohydrate-binding motif 2 motif.

In terms of assembly, forms heterodimers.

It is found in the secreted. Functionally, mannose-specific lectin. Shows agglutinating activity towards erythrocytes from rabbit. The chain is Mannose-specific lectin 1 from Remusatia vivipara (Hitchhiker elephant ear).